The primary structure comprises 601 residues: Cdc42-interacting protein 4 (601 aa).

Residues 1–117 (MDWGTELWDQ…EMKQERKMHF (117 aa)) form a required for translocation to the plasma membrane in response to insulin, podosome formation and interaction with AKAP9 and microtubules region. The 264-residue stretch at 1-264 (MDWGTELWDQ…AANAVDPKND (264 aa)) folds into the F-BAR domain. Residues 67–259 (FSQQQSFVQI…EGMKVAANAV (193 aa)) adopt a coiled-coil conformation. Disordered regions lie at residues 280-358 (GDVE…GRDP), 390-420 (DFSHLPPEQQRKRLQQQLEERSRELQKEVDQ), and 478-543 (NRGD…SPIG). A compositionally biased stretch (polar residues) spans 289 to 302 (QPMNRAPSDSSLGT). The segment at 293-537 (RAPSDSSLGT…TEFDEDFEEE (245 aa)) is interaction with CDC42. The segment at 293–601 (RAPSDSSLGT…PTSYLRVTLN (309 aa)) is interaction with PDE6G. 3 positions are modified to phosphoserine: Ser-296, Ser-298, and Ser-299. A compositionally biased stretch (basic residues) spans 314–329 (GRSRTKRWPFGKKNKP). Phosphoserine is present on Ser-335. Low complexity predominate over residues 336–346 (PLGGPVPSALP). Residue Ser-351 is modified to Phosphoserine. Residues 388–481 (TEDFSHLPPE…ESRVLSNRGD (94 aa)) are a coiled coil. The REM-1 domain maps to 393–470 (HLPPEQQRKR…VQKYEAWLAE (78 aa)). Basic and acidic residues predominate over residues 407–420 (LEERSRELQKEVDQ). The segment at 471 to 601 (AESRVLSNRG…PTSYLRVTLN (131 aa)) is required for interaction with FASLG and localization to lysosomes. The residue at position 482 (Ser-482) is a Phosphoserine. The interaction with DNM2 and WASL stretch occupies residues 487–541 (ARPPDPPTSAPPDSSSNSASQDTKESSEEPPSEESQDTPIYTEFDEDFEEEPTSP). Low complexity predominate over residues 497 to 506 (PPDSSSNSAS). Acidic residues predominate over residues 529–538 (EFDEDFEEEP). Residues 529 to 601 (EFDEDFEEEP…PTSYLRVTLN (73 aa)) are interaction with DNM1 and WASL. The required for podosome formation stretch occupies residues 538-601 (PTSPIGHCVA…PTSYLRVTLN (64 aa)). The region spanning 540–601 (SPIGHCVAIY…PTSYLRVTLN (62 aa)) is the SH3 domain. Residues 544–601 (HCVAIYHFEGSSEGTISMAEGEDLSLMEEDKGDGWTRVRRKEGGEGYVPTSYLRVTLN) are interaction with WAS. The tract at residues 546–601 (VAIYHFEGSSEGTISMAEGEDLSLMEEDKGDGWTRVRRKEGGEGYVPTSYLRVTLN) is interaction with ARHGAP17, DAAM1, DIAPH1 and DIAPH2.

Belongs to the FNBP1 family. Homodimerizes, the dimers can polymerize end-to-end to form filamentous structures. Interacts with AKAP9, ARHGAP17, DAAM1, DIAPH1, DIAPH2, DNM1, FASLG/FASL, GAPVD1, LYN, microtubules, PDE6G, SRC and WAS/WASP. Interacts with the ligand binding domain of the thyroid receptor (TR) in the presence of thyroid hormone. May interact with CTNNB1 and HD/HTT. Interacts specifically with GTP-bound CDC42 and RHOQ. Interacts with DNM2 and WASL. Post-translationally, tyrosine phosphorylated. Also phosphorylated by PKA.

It localises to the cytoplasm. It is found in the cytoskeleton. The protein localises to the cell cortex. Its subcellular location is the lysosome. The protein resides in the golgi apparatus. It localises to the cell membrane. It is found in the cell projection. The protein localises to the phagocytic cup. In terms of biological role, required to coordinate membrane tubulation with reorganization of the actin cytoskeleton during endocytosis. Also acts as a link between CDC42 signaling and regulation of the actin cytoskeleton. Binds to lipids such as phosphatidylinositol 4,5-bisphosphate and phosphatidylserine and promotes membrane invagination and the formation of tubules. Also enhances actin polymerization in the vicinity of membrane tubules by recruiting WASL/N-WASP which in turn activates the Arp2/3 complex. Actin polymerization and dynamin may promote the fission of membrane tubules to form endocytic vesicles. Required for the formation of podosomes, actin-rich adhesion structures specific to monocyte-derived cells. Required for translocation of GLUT4 to the plasma membrane in response to insulin signaling. May be required for the lysosomal retention of FASLG/FASL. The polypeptide is Cdc42-interacting protein 4 (TRIP10) (Pongo abelii (Sumatran orangutan)).